Here is a 109-residue protein sequence, read N- to C-terminus: Co-chaperonin GroES (109 aa).

It belongs to the GroES chaperonin family. As to quaternary structure, heptamer of 7 subunits arranged in a ring. Interacts with the chaperonin GroEL.

Its subcellular location is the cytoplasm. Functionally, together with the chaperonin GroEL, plays an essential role in assisting protein folding. The GroEL-GroES system forms a nano-cage that allows encapsulation of the non-native substrate proteins and provides a physical environment optimized to promote and accelerate protein folding. GroES binds to the apical surface of the GroEL ring, thereby capping the opening of the GroEL channel. The polypeptide is Co-chaperonin GroES (Methanosarcina acetivorans (strain ATCC 35395 / DSM 2834 / JCM 12185 / C2A)).